A 366-amino-acid chain; its full sequence is Chorismate synthase (366 aa).

Arg48 and Arg54 together coordinate NADP(+). FMN contacts are provided by residues Arg125 to Ser127, Asn238 to Ala239, Gly278, Lys293 to Ser297, and Arg319.

It belongs to the chorismate synthase family. Homotetramer. The cofactor is FMNH2.

It catalyses the reaction 5-O-(1-carboxyvinyl)-3-phosphoshikimate = chorismate + phosphate. Its pathway is metabolic intermediate biosynthesis; chorismate biosynthesis; chorismate from D-erythrose 4-phosphate and phosphoenolpyruvate: step 7/7. Functionally, catalyzes the anti-1,4-elimination of the C-3 phosphate and the C-6 proR hydrogen from 5-enolpyruvylshikimate-3-phosphate (EPSP) to yield chorismate, which is the branch point compound that serves as the starting substrate for the three terminal pathways of aromatic amino acid biosynthesis. This reaction introduces a second double bond into the aromatic ring system. The polypeptide is Chorismate synthase (Pseudoalteromonas atlantica (strain T6c / ATCC BAA-1087)).